A 106-amino-acid polypeptide reads, in one-letter code: Violacin-A (106 aa).

The signal sequence occupies residues Met1–Ala29. A propeptide spanning residues Val30–Asp79 is cleaved from the precursor. Intrachain disulfides connect Cys84/Cys98, Cys88/Cys100, and Cys93/Cys105.

The protein belongs to the cyclotide family. Moebius subfamily. In terms of processing, violacin-A is not a cyclic peptide.

Probably participates in a plant defense mechanism. Has low hemolytic activity. The chain is Violacin-A from Viola odorata (Sweet violet).